A 418-amino-acid chain; its full sequence is 26S proteasome regulatory subunit 6B (418 aa).

Met-1 is subject to N-acetylmethionine. Ser-21 bears the Phosphoserine mark. Position 25 is a phosphothreonine (Thr-25). At Ser-28 the chain carries Phosphoserine. ATP is bound at residue 206–213 (GPPGCGKT). N6-acetyllysine is present on residues Lys-397 and Lys-401.

Belongs to the AAA ATPase family. As to quaternary structure, component of the 19S proteasome regulatory particle complex. The 26S proteasome consists of a 20S core particle (CP) and two 19S regulatory subunits (RP). The regulatory particle is made of a lid composed of 9 subunits, a base containing 6 ATPases including PSMC4 and few additional components. Interacts with NR1I3. Interacts with PAAF1. Interacts with TRIM5. Interacts with ZFAND1.

The protein localises to the cytoplasm. The protein resides in the nucleus. Its function is as follows. Component of the 26S proteasome, a multiprotein complex involved in the ATP-dependent degradation of ubiquitinated proteins. This complex plays a key role in the maintenance of protein homeostasis by removing misfolded or damaged proteins, which could impair cellular functions, and by removing proteins whose functions are no longer required. Therefore, the proteasome participates in numerous cellular processes, including cell cycle progression, apoptosis, or DNA damage repair. PSMC4 belongs to the heterohexameric ring of AAA (ATPases associated with diverse cellular activities) proteins that unfolds ubiquitinated target proteins that are concurrently translocated into a proteolytic chamber and degraded into peptides. The sequence is that of 26S proteasome regulatory subunit 6B (PSMC4) from Bos taurus (Bovine).